The primary structure comprises 1220 residues: Limbin (1220 aa).

The N-terminal stretch at 1–29 (MGATGPTGAGGRATWVLAGNILAAALVLG) is a signal peptide. Over 30–210 (SGPRALPPSF…VLPNHGLHAA (181 aa)) the chain is Extracellular. The segment at 38 to 59 (SFPALGPGSPSRPGPAGPWASS) is disordered. N100, N109, and N130 each carry an N-linked (GlcNAc...) asparagine glycan. The chain crosses the membrane as a helical span at residues 211–231 (GFIAAFLISLLLTVAALFFLA). Over 232–1220 (RGRCLQGGML…KKANRALGLD (989 aa)) the chain is Cytoplasmic. Coiled coils occupy residues 355–404 (EEYE…SAAE), 563–644 (KQKL…AALD), 854–875 (GELL…AESL), and 920–1005 (QILE…VREE).

In terms of assembly, component of the EvC complex composed of EFCAB7, IQCE, EVC2 and EVC; built from two subcomplexes, EVC2:EVC and EFCAB7:IQCE. Interacts with EVC. Interacts (via N-terminal end) with EFCAB7. Interacts (via N-terminal end) with IQCE. In terms of tissue distribution, expressed in long and cranial bones, kidney and heart. Strongly expressed in proliferating chondrocytes, osteoblasts and osteoclasts.

The protein resides in the cell membrane. It localises to the cytoplasm. The protein localises to the cytoskeleton. Its subcellular location is the cilium basal body. It is found in the cell projection. The protein resides in the cilium. It localises to the cilium membrane. The protein localises to the nucleus. In terms of biological role, component of the EvC complex that positively regulates ciliary Hedgehog (Hh) signaling. Plays a critical role in bone formation and skeletal development. May be involved in early embryonic morphogenesis. This Mus musculus (Mouse) protein is Limbin (Evc2).